A 464-amino-acid polypeptide reads, in one-letter code: ATP synthase subunit beta 2 (464 aa).

147–154 (GGAGVGKT) is a binding site for ATP.

The protein belongs to the ATPase alpha/beta chains family. As to quaternary structure, F-type ATPases have 2 components, CF(1) - the catalytic core - and CF(0) - the membrane proton channel. CF(1) has five subunits: alpha(3), beta(3), gamma(1), delta(1), epsilon(1). CF(0) has four main subunits: a(1), b(1), b'(1) and c(9-12).

It localises to the cell inner membrane. The catalysed reaction is ATP + H2O + 4 H(+)(in) = ADP + phosphate + 5 H(+)(out). In terms of biological role, produces ATP from ADP in the presence of a proton gradient across the membrane. The catalytic sites are hosted primarily by the beta subunits. The chain is ATP synthase subunit beta 2 from Cereibacter sphaeroides (strain ATCC 17023 / DSM 158 / JCM 6121 / CCUG 31486 / LMG 2827 / NBRC 12203 / NCIMB 8253 / ATH 2.4.1.) (Rhodobacter sphaeroides).